A 238-amino-acid polypeptide reads, in one-letter code: ATP synthase subunit a, chloroplastic (238 aa).

Transmembrane regions (helical) follow at residues 27 to 47 (GQVLITSWVVLGILAVLSFLG), 86 to 106 (VPFLGTIFLFIFVSNWSGALL), 125 to 145 (INTTVALALLTSISYFYAGIS), 190 to 210 (LVVGVLVALVPLIIPIPIMLL), and 211 to 231 (GVFTSAIQALVFATLAGAYIN).

It belongs to the ATPase A chain family. F-type ATPases have 2 components, F(1) - the catalytic core - and F(0) - the membrane proton channel. F(1) has five subunits: alpha(3), beta(3), gamma(1), delta(1), epsilon(1). F(0) has four main subunits: a(1), b(1), b'(1) and c(10-14). The alpha and beta chains form an alternating ring which encloses part of the gamma chain. F(1) is attached to F(0) by a central stalk formed by the gamma and epsilon chains, while a peripheral stalk is formed by the delta, b and b' chains.

The protein localises to the plastid. It is found in the chloroplast thylakoid membrane. Its function is as follows. F(1)F(0) ATP synthase produces ATP from ADP in the presence of a proton or sodium gradient. F-type ATPases consist of two structural domains, F(1) containing the extramembraneous catalytic core and F(0) containing the membrane proton channel, linked together by a central stalk and a peripheral stalk. During catalysis, ATP synthesis in the catalytic domain of F(1) is coupled via a rotary mechanism of the central stalk subunits to proton translocation. The chain is ATP synthase subunit a, chloroplastic from Chlamydomonas reinhardtii (Chlamydomonas smithii).